A 448-amino-acid chain; its full sequence is UDP-N-acetylmuramoylalanine--D-glutamate ligase (448 aa).

116 to 122 contacts ATP; it reads GSNAKST.

It belongs to the MurCDEF family.

It localises to the cytoplasm. The enzyme catalyses UDP-N-acetyl-alpha-D-muramoyl-L-alanine + D-glutamate + ATP = UDP-N-acetyl-alpha-D-muramoyl-L-alanyl-D-glutamate + ADP + phosphate + H(+). It functions in the pathway cell wall biogenesis; peptidoglycan biosynthesis. In terms of biological role, cell wall formation. Catalyzes the addition of glutamate to the nucleotide precursor UDP-N-acetylmuramoyl-L-alanine (UMA). The sequence is that of UDP-N-acetylmuramoylalanine--D-glutamate ligase from Pseudomonas fluorescens (strain ATCC BAA-477 / NRRL B-23932 / Pf-5).